Reading from the N-terminus, the 419-residue chain is UDP-N-acetylglucosamine 1-carboxyvinyltransferase (419 aa).

Phosphoenolpyruvate is bound at residue 22–23 (KN). Arginine 95 lines the UDP-N-acetyl-alpha-D-glucosamine pocket. Cysteine 119 acts as the Proton donor in catalysis. A 2-(S-cysteinyl)pyruvic acid O-phosphothioketal modification is found at cysteine 119. Aspartate 308 and isoleucine 330 together coordinate UDP-N-acetyl-alpha-D-glucosamine.

The protein belongs to the EPSP synthase family. MurA subfamily.

The protein resides in the cytoplasm. The catalysed reaction is phosphoenolpyruvate + UDP-N-acetyl-alpha-D-glucosamine = UDP-N-acetyl-3-O-(1-carboxyvinyl)-alpha-D-glucosamine + phosphate. Its pathway is cell wall biogenesis; peptidoglycan biosynthesis. Its function is as follows. Cell wall formation. Adds enolpyruvyl to UDP-N-acetylglucosamine. This chain is UDP-N-acetylglucosamine 1-carboxyvinyltransferase, found in Rickettsia bellii (strain OSU 85-389).